The sequence spans 785 residues: DNA ligase (785 aa).

NAD(+)-binding positions include 32-36 (DAEYD), 81-82 (SL), and glutamate 121. Catalysis depends on lysine 123, which acts as the N6-AMP-lysine intermediate. Arginine 144, glutamate 181, lysine 294, and lysine 318 together coordinate NAD(+). The Zn(2+) site is built by cysteine 412, cysteine 415, cysteine 442, and cysteine 448. The BRCT domain occupies 702 to 785 (VEGLPEAGHT…AFLAKHNIPV (84 aa)).

The protein belongs to the NAD-dependent DNA ligase family. LigA subfamily. Mg(2+) is required as a cofactor. It depends on Mn(2+) as a cofactor.

It carries out the reaction NAD(+) + (deoxyribonucleotide)n-3'-hydroxyl + 5'-phospho-(deoxyribonucleotide)m = (deoxyribonucleotide)n+m + AMP + beta-nicotinamide D-nucleotide.. In terms of biological role, DNA ligase that catalyzes the formation of phosphodiester linkages between 5'-phosphoryl and 3'-hydroxyl groups in double-stranded DNA using NAD as a coenzyme and as the energy source for the reaction. It is essential for DNA replication and repair of damaged DNA. The protein is DNA ligase of Pseudomonas fluorescens (strain SBW25).